The primary structure comprises 671 residues: Putative protein kinase C delta type homolog (671 aa).

Residues 1–136 (MMFTRAQVRK…ITNRRGAIKH (136 aa)) form a disordered region. The span at 14–27 (SNSSSQRPRSSGGS) shows a compositional bias: low complexity. Residues 57–101 (ARRDQYRDRDHYGKHSFELPRQHSKEEAYHRDRESSAGGVDRGER) are compositionally biased toward basic and acidic residues. A compositionally biased stretch (gly residues) spans 102-116 (SGIGGNGGGVTGGGV). Phorbol-ester/DAG-type zinc fingers lie at residues 144–194 (GHRF…LGKC) and 216–266 (PHRF…ANLC). Positions 343–601 (FHFLAVLGKG…AGDIADHIFF (259 aa)) constitute a Protein kinase domain. Residues 349-357 (LGKGSFGKV) and K372 each bind ATP. Catalysis depends on D467, which acts as the Proton acceptor. The 70-residue stretch at 602 to 671 (RPIDWGLLEK…TYTNPHITLD (70 aa)) folds into the AGC-kinase C-terminal domain.

Belongs to the protein kinase superfamily. AGC Ser/Thr protein kinase family. PKC subfamily.

It catalyses the reaction L-seryl-[protein] + ATP = O-phospho-L-seryl-[protein] + ADP + H(+). The enzyme catalyses L-threonyl-[protein] + ATP = O-phospho-L-threonyl-[protein] + ADP + H(+). In Drosophila melanogaster (Fruit fly), this protein is Putative protein kinase C delta type homolog.